Here is a 282-residue protein sequence, read N- to C-terminus: Hydrogenase expression/formation protein HoxQ (282 aa).

It belongs to the HupH/HyaF family.

This Cupriavidus necator (strain ATCC 17699 / DSM 428 / KCTC 22496 / NCIMB 10442 / H16 / Stanier 337) (Ralstonia eutropha) protein is Hydrogenase expression/formation protein HoxQ (hoxQ).